The chain runs to 444 residues: Deoxyguanosinetriphosphate triphosphohydrolase-like protein (444 aa).

The segment at 1 to 28 is disordered; that stretch reads MTDAVWNERRLGEDKQRRNDHRSPYQRD. An HD domain is found at 59-250; sequence RLTHSLEVSQ…MELADDIAYA (192 aa).

This sequence belongs to the dGTPase family. Type 2 subfamily.

This is Deoxyguanosinetriphosphate triphosphohydrolase-like protein from Shewanella pealeana (strain ATCC 700345 / ANG-SQ1).